We begin with the raw amino-acid sequence, 85 residues long: Putative membrane protein insertion efficiency factor (85 aa).

It belongs to the UPF0161 family.

Its subcellular location is the cell inner membrane. Its function is as follows. Could be involved in insertion of integral membrane proteins into the membrane. In Escherichia coli O6:H1 (strain CFT073 / ATCC 700928 / UPEC), this protein is Putative membrane protein insertion efficiency factor.